We begin with the raw amino-acid sequence, 649 residues long: Macrolide export ATP-binding/permease protein MacB (649 aa).

An ABC transporter domain is found at 7 to 245 (IELKNIVRRY…SSAQEVTPQL (239 aa)). 43–50 (GASGSGKS) contacts ATP. 4 consecutive transmembrane segments (helical) span residues 276–296 (LLTMLGIIIGIAAVVCVIALG), 529–549 (IAFISLVVGGIGVMNIMLVSV), 582–602 (LLGGMLGVLLSLLLGGLFSAF), and 612–632 (FSSFLIAFVCSSMIGMIFGYF).

The protein belongs to the ABC transporter superfamily. Macrolide exporter (TC 3.A.1.122) family. Homodimer. Part of the tripartite efflux system MacAB-TolC, which is composed of an inner membrane transporter, MacB, a periplasmic membrane fusion protein, MacA, and an outer membrane component, TolC. The complex forms a large protein conduit and can translocate molecules across both the inner and outer membranes. Interacts with MacA.

It localises to the cell inner membrane. Functionally, part of the tripartite efflux system MacAB-TolC. MacB is a non-canonical ABC transporter that contains transmembrane domains (TMD), which form a pore in the inner membrane, and an ATP-binding domain (NBD), which is responsible for energy generation. Confers resistance against macrolides. In Pasteurella multocida (strain Pm70), this protein is Macrolide export ATP-binding/permease protein MacB.